A 334-amino-acid polypeptide reads, in one-letter code: Cathepsin K (334 aa).

The N-terminal stretch at 1–19 is a signal peptide; the sequence is MLRLHWLALLVLLLPMAAA. The propeptide at 20 to 119 is activation peptide; it reads QLRPEPELDA…TLYVPDWSSR (100 aa). Residue N108 is glycosylated (N-linked (GlcNAc...) asparagine). 3 cysteine pairs are disulfide-bonded: C141–C182, C175–C215, and C274–C323. C144 is a catalytic residue. Residues H281 and N301 contribute to the active site.

It belongs to the peptidase C1 family.

It carries out the reaction Broad proteolytic activity. With small-molecule substrates and inhibitors, the major determinant of specificity is P2, which is preferably Leu, Met &gt; Phe, and not Arg.. Functionally, closely involved in osteoclastic bone resorption and may participate partially in the disorder of bone remodeling. Displays potent endoprotease activity against fibrinogen at acid pH. May play an important role in extracellular matrix degradation. This is Cathepsin K (CTSK) from Gallus gallus (Chicken).